The following is a 275-amino-acid chain: Photosystem II extrinsic protein O (275 aa).

Positions 1–28 (MRFRTLLIAFLALCLGLITACSEGPANA) are cleaved as a signal peptide.

It belongs to the PsbO family. As to quaternary structure, PSII is composed of 1 copy each of membrane proteins PsbA, PsbB, PsbC, PsbD, PsbE, PsbF, PsbH, PsbI, PsbJ, PsbK, PsbL, PsbM, PsbT, PsbX, PsbY, PsbZ, Psb30/Ycf12, peripheral proteins PsbO, CyanoQ (PsbQ), PsbU, PsbV and a large number of cofactors. It forms dimeric complexes.

The protein localises to the cellular thylakoid membrane. One of the extrinsic, lumenal subunits of photosystem II (PSII), which stabilize and protect the oxygen-evolving complex. PSII is a light-driven water plastoquinone oxidoreductase, using light energy to abstract electrons from H(2)O, generating a proton gradient subsequently used for ATP formation. Required for dimerization of PSII and for binding of PsbQ to PSII. The protein is Photosystem II extrinsic protein O of Crocosphaera subtropica (strain ATCC 51142 / BH68) (Cyanothece sp. (strain ATCC 51142)).